The primary structure comprises 421 residues: Adenylosuccinate synthetase (421 aa).

GTP is bound by residues 11-17 (GDEGKGK) and 39-41 (GHT). The active-site Proton acceptor is Asp12. Residues Asp12 and Gly39 each contribute to the Mg(2+) site. IMP is bound by residues 12 to 15 (DEGK), 37 to 40 (NAGH), Thr129, Arg143, Asn219, Thr234, and Arg298. The active-site Proton donor is the His40. A substrate-binding site is contributed by 294-300 (VTTGRRR). GTP is bound by residues Arg300, 326–328 (KLD), and 409–411 (GTG).

This sequence belongs to the adenylosuccinate synthetase family. In terms of assembly, homodimer. Mg(2+) serves as cofactor.

It is found in the cytoplasm. The enzyme catalyses IMP + L-aspartate + GTP = N(6)-(1,2-dicarboxyethyl)-AMP + GDP + phosphate + 2 H(+). Its pathway is purine metabolism; AMP biosynthesis via de novo pathway; AMP from IMP: step 1/2. Plays an important role in the de novo pathway and in the salvage pathway of purine nucleotide biosynthesis. Catalyzes the first committed step in the biosynthesis of AMP from IMP. In Paracoccidioides lutzii (strain ATCC MYA-826 / Pb01) (Paracoccidioides brasiliensis), this protein is Adenylosuccinate synthetase.